Here is a 257-residue protein sequence, read N- to C-terminus: Phosphonates import ATP-binding protein PhnC (257 aa).

The 245-residue stretch at 2–246 (IEFRNVSKVY…KFAEIYGDVA (245 aa)) folds into the ABC transporter domain. 35 to 42 (GLSGAGKS) lines the ATP pocket.

The protein belongs to the ABC transporter superfamily. Phosphonates importer (TC 3.A.1.9.1) family. As to quaternary structure, the complex is composed of two ATP-binding proteins (PhnC), two transmembrane proteins (PhnE) and a solute-binding protein (PhnD).

The protein localises to the cell membrane. It catalyses the reaction phosphonate(out) + ATP + H2O = phosphonate(in) + ADP + phosphate + H(+). Part of the ABC transporter complex PhnCDE involved in phosphonates import. Responsible for energy coupling to the transport system. This is Phosphonates import ATP-binding protein PhnC from Bacillus cereus (strain ZK / E33L).